The primary structure comprises 142 residues: Putative transcriptional regulatory protein Mevan_1098 (142 aa).

The protein belongs to the Tfx family.

Putative transcriptional regulator. The polypeptide is Putative transcriptional regulatory protein Mevan_1098 (Methanococcus vannielii (strain ATCC 35089 / DSM 1224 / JCM 13029 / OCM 148 / SB)).